The primary structure comprises 657 residues: MPRGLILATPQLPPDGTPFSARYDDVYHSTEGGLAQAHHVFLGGNGLPGGWQGKRSFTIVETGFGQGLNFLATWAAWRDDPQRCGRLDFVSVEKHPFDRAGLALVHAQEGALASLAEALRQAWPVPVPGVHRLVFDAGRVTLTLMLGDAETLLPQLSCAADAFYLDGFSPAKNPDLWQPGVFKQLARIARGGATLATYTAAGAVRHGLREAGFEVRKAPGFGRKRDMTVAAFPTHWRTRRGPAEAPVWPERHAIVLGAGLAGCSVAERLAARGWRITLIDEHEAPAGGASAHRAAAMHPHVSIDDSVLSRLSRAGNLLARRHWEALDRAGFATGFHPTGVLQLAEHADDAAEQQRIVQALGFPADFIAWLDAARAADRVGAGVPQGGWWFAQAGWVAPPDICRAALAAAGEAVELRWRTRIESLLRHDAGWRACDAQGNVIAHAPVVVLANSLDAVRLAPLASAALKPVRGQLTDVPVAALEDGVPWPRAVVCGDGYLLPRERGAPTVRVGSSFQPGETDPDARTADHAANLRRLAGLQPAHAAALARVDPARLLGYVGVRCVSANRLPLIGAVADEAAIMAPGFRLRGPHAALPRVPGLYAALAYGSRGLTWSVLGAELLAAQIDGGPLPLESELAAALDPGRFLMRALRHGKHAA.

Residues 1–233 (MPRGLILATP…KRDMTVAAFP (233 aa)) form a tRNA (mnm(5)s(2)U34)-methyltransferase region. Residues 256–657 (LGAGLAGCSV…RALRHGKHAA (402 aa)) form an FAD-dependent cmnm(5)s(2)U34 oxidoreductase region.

In the N-terminal section; belongs to the methyltransferase superfamily. tRNA (mnm(5)s(2)U34)-methyltransferase family. The protein in the C-terminal section; belongs to the DAO family. It depends on FAD as a cofactor.

It is found in the cytoplasm. It carries out the reaction 5-aminomethyl-2-thiouridine(34) in tRNA + S-adenosyl-L-methionine = 5-methylaminomethyl-2-thiouridine(34) in tRNA + S-adenosyl-L-homocysteine + H(+). Functionally, catalyzes the last two steps in the biosynthesis of 5-methylaminomethyl-2-thiouridine (mnm(5)s(2)U) at the wobble position (U34) in tRNA. Catalyzes the FAD-dependent demodification of cmnm(5)s(2)U34 to nm(5)s(2)U34, followed by the transfer of a methyl group from S-adenosyl-L-methionine to nm(5)s(2)U34, to form mnm(5)s(2)U34. The chain is tRNA 5-methylaminomethyl-2-thiouridine biosynthesis bifunctional protein MnmC from Ralstonia nicotianae (strain ATCC BAA-1114 / GMI1000) (Ralstonia solanacearum).